We begin with the raw amino-acid sequence, 284 residues long: Bifunctional protein FolD (284 aa).

Residues 165 to 167 and S190 contribute to the NADP(+) site; that span reads GRS.

It belongs to the tetrahydrofolate dehydrogenase/cyclohydrolase family. As to quaternary structure, homodimer.

It catalyses the reaction (6R)-5,10-methylene-5,6,7,8-tetrahydrofolate + NADP(+) = (6R)-5,10-methenyltetrahydrofolate + NADPH. The enzyme catalyses (6R)-5,10-methenyltetrahydrofolate + H2O = (6R)-10-formyltetrahydrofolate + H(+). Its pathway is one-carbon metabolism; tetrahydrofolate interconversion. In terms of biological role, catalyzes the oxidation of 5,10-methylenetetrahydrofolate to 5,10-methenyltetrahydrofolate and then the hydrolysis of 5,10-methenyltetrahydrofolate to 10-formyltetrahydrofolate. The chain is Bifunctional protein FolD from Streptococcus pyogenes serotype M28 (strain MGAS6180).